Consider the following 395-residue polypeptide: NAD(P)H-quinone oxidoreductase subunit H, chloroplastic (395 aa).

It belongs to the complex I 49 kDa subunit family. In terms of assembly, NDH is composed of at least 16 different subunits, 5 of which are encoded in the nucleus.

The protein resides in the plastid. It is found in the chloroplast thylakoid membrane. The enzyme catalyses a plastoquinone + NADH + (n+1) H(+)(in) = a plastoquinol + NAD(+) + n H(+)(out). It carries out the reaction a plastoquinone + NADPH + (n+1) H(+)(in) = a plastoquinol + NADP(+) + n H(+)(out). NDH shuttles electrons from NAD(P)H:plastoquinone, via FMN and iron-sulfur (Fe-S) centers, to quinones in the photosynthetic chain and possibly in a chloroplast respiratory chain. The immediate electron acceptor for the enzyme in this species is believed to be plastoquinone. Couples the redox reaction to proton translocation, and thus conserves the redox energy in a proton gradient. This Citrus sinensis (Sweet orange) protein is NAD(P)H-quinone oxidoreductase subunit H, chloroplastic.